Consider the following 1153-residue polypeptide: Error-prone DNA polymerase (1153 aa).

Disordered stretches follow at residues 1–39 (MFYS…QAQP) and 64–89 (VGEG…GASQ).

Belongs to the DNA polymerase type-C family. DnaE2 subfamily.

The protein localises to the cytoplasm. It catalyses the reaction DNA(n) + a 2'-deoxyribonucleoside 5'-triphosphate = DNA(n+1) + diphosphate. Functionally, DNA polymerase involved in damage-induced mutagenesis and translesion synthesis (TLS). It is not the major replicative DNA polymerase. The polypeptide is Error-prone DNA polymerase (Corynebacterium jeikeium (strain K411)).